The primary structure comprises 238 residues: Ubiquinone biosynthesis O-methyltransferase (238 aa).

Arg38, Gly58, Asp79, and Met124 together coordinate S-adenosyl-L-methionine.

Belongs to the methyltransferase superfamily. UbiG/COQ3 family.

The catalysed reaction is a 3-demethylubiquinol + S-adenosyl-L-methionine = a ubiquinol + S-adenosyl-L-homocysteine + H(+). The enzyme catalyses a 3-(all-trans-polyprenyl)benzene-1,2-diol + S-adenosyl-L-methionine = a 2-methoxy-6-(all-trans-polyprenyl)phenol + S-adenosyl-L-homocysteine + H(+). Its pathway is cofactor biosynthesis; ubiquinone biosynthesis. Functionally, O-methyltransferase that catalyzes the 2 O-methylation steps in the ubiquinone biosynthetic pathway. The sequence is that of Ubiquinone biosynthesis O-methyltransferase from Acinetobacter baylyi (strain ATCC 33305 / BD413 / ADP1).